We begin with the raw amino-acid sequence, 536 residues long: Lariat debranching enzyme (536 aa).

A divalent metal cation-binding residues include Cys-8, His-10, Asp-39, and Asn-84. The lariat recognition loop stretch occupies residues 124–154; it reads SGIFKSHDYRKGHFECPPYNQQTIRSAYHVR. 3 residues coordinate a divalent metal cation: His-174, His-226, and His-228. The interval 388 to 536 is disordered; that stretch reads EEGSVRGEYE…YAAEDEDEAK (149 aa). Polar residues predominate over residues 414–426; it reads EYNTDNSGLSSIN. A compositionally biased stretch (acidic residues) spans 430–441; sequence IMLDDEGGDEDL. Residues 484 to 504 are compositionally biased toward basic and acidic residues; sequence ELEKSGVNKQVEEKSLNERPL.

It belongs to the lariat debranching enzyme family. Requires Fe(2+) as cofactor. Zn(2+) serves as cofactor. The cofactor is Mn(2+).

It is found in the nucleus. With respect to regulation, active in presence of diverse metals including Fe(2+), Zn(2+), Mn(2+). Also activated by Ca(2+). Binds two metal cations in two adjacent alpha and beta metal-binding pockets. Its function is as follows. Cleaves the 2'-5' phosphodiester linkage at the branch point of excised lariat intron RNA and converts them into linear molecules that can be subsequently degraded, thereby facilitating ribonucleotide turnover. Linked to its role in pre-mRNA processing mechanism, may also participate in retrovirus replication and have an antiviral cell-intrinsic defense function. This chain is Lariat debranching enzyme (DBR1), found in Gallus gallus (Chicken).